A 517-amino-acid polypeptide reads, in one-letter code: Type II methyltransferase M.CeqI (517 aa).

2 disordered regions span residues Met1–Arg21 and Gly33–Ser62. Over residues Arg51–Ser62 the composition is skewed to basic residues. TPR repeat units follow at residues Ala283–Asn316, Ala361–Ser394, and Ser476–Met509.

It carries out the reaction a 2'-deoxyadenosine in DNA + S-adenosyl-L-methionine = an N(6)-methyl-2'-deoxyadenosine in DNA + S-adenosyl-L-homocysteine + H(+). Functionally, a methylase, recognizes the double-stranded sequence 5'-GATATC-3', methylates A-? on both strands, and protects the DNA from cleavage by the CeqI endonuclease. The protein is Type II methyltransferase M.CeqI (ceqIM) of Rhodococcus hoagii (Corynebacterium equii).